The chain runs to 208 residues: Imidazole glycerol phosphate synthase subunit HisH (208 aa).

In terms of domain architecture, Glutamine amidotransferase type-1 spans 2-208 (NVTIVDYNSG…LKIIENFLNL (207 aa)). The active-site Nucleophile is the Cys-85. Active-site residues include His-190 and Glu-192.

As to quaternary structure, heterodimer of HisH and HisF.

It localises to the cytoplasm. It catalyses the reaction 5-[(5-phospho-1-deoxy-D-ribulos-1-ylimino)methylamino]-1-(5-phospho-beta-D-ribosyl)imidazole-4-carboxamide + L-glutamine = D-erythro-1-(imidazol-4-yl)glycerol 3-phosphate + 5-amino-1-(5-phospho-beta-D-ribosyl)imidazole-4-carboxamide + L-glutamate + H(+). It carries out the reaction L-glutamine + H2O = L-glutamate + NH4(+). Its pathway is amino-acid biosynthesis; L-histidine biosynthesis; L-histidine from 5-phospho-alpha-D-ribose 1-diphosphate: step 5/9. Functionally, IGPS catalyzes the conversion of PRFAR and glutamine to IGP, AICAR and glutamate. The HisH subunit catalyzes the hydrolysis of glutamine to glutamate and ammonia as part of the synthesis of IGP and AICAR. The resulting ammonia molecule is channeled to the active site of HisF. The sequence is that of Imidazole glycerol phosphate synthase subunit HisH from Pelagibacter ubique (strain HTCC1062).